The following is a 110-amino-acid chain: Multidrug transporter PA4990 (110 aa).

The next 4 helical transmembrane spans lie at 7 to 27 (LAIAIAAEVVATTSLKAVAGF), 31 to 51 (LPLLLVVGGYVLAFSMLVLVM), 58 to 78 (VVYAIWSGLGIVLVSLVAMFV), and 85 to 105 (PAALLGIGLIIAGVLVIQLFS).

It belongs to the drug/metabolite transporter (DMT) superfamily. Small multidrug resistance (SMR) (TC 2.A.7.1) family.

The protein resides in the cell membrane. Its function is as follows. Confers resistance to ethidium bromide, acriflavine and methyl viologen. In Pseudomonas aeruginosa (strain ATCC 15692 / DSM 22644 / CIP 104116 / JCM 14847 / LMG 12228 / 1C / PRS 101 / PAO1), this protein is Multidrug transporter PA4990.